The sequence spans 340 residues: Biotin synthase (340 aa).

Residues 56–283 (NAVQLSTLLS…KAVVRLSAGR (228 aa)) enclose the Radical SAM core domain. Residues Cys-71, Cys-75, and Cys-78 each contribute to the [4Fe-4S] cluster site. Cys-115, Cys-146, Cys-206, and Arg-278 together coordinate [2Fe-2S] cluster.

The protein belongs to the radical SAM superfamily. Biotin synthase family. Homodimer. The cofactor is [4Fe-4S] cluster. [2Fe-2S] cluster serves as cofactor.

It carries out the reaction (4R,5S)-dethiobiotin + (sulfur carrier)-SH + 2 reduced [2Fe-2S]-[ferredoxin] + 2 S-adenosyl-L-methionine = (sulfur carrier)-H + biotin + 2 5'-deoxyadenosine + 2 L-methionine + 2 oxidized [2Fe-2S]-[ferredoxin]. The protein operates within cofactor biosynthesis; biotin biosynthesis; biotin from 7,8-diaminononanoate: step 2/2. Functionally, catalyzes the conversion of dethiobiotin (DTB) to biotin by the insertion of a sulfur atom into dethiobiotin via a radical-based mechanism. The polypeptide is Biotin synthase (Burkholderia lata (strain ATCC 17760 / DSM 23089 / LMG 22485 / NCIMB 9086 / R18194 / 383)).